Reading from the N-terminus, the 1008-residue chain is Translation initiation factor IF-2 (1008 aa).

Disordered regions lie at residues 113 to 136, 153 to 235, and 253 to 405; these read AVTA…KGNV, DKDS…PAAP, and GLTV…YRKD. Composition is skewed to basic and acidic residues over residues 153 to 180 and 189 to 213; these read DKDS…KAKP and PKPE…KAET. Composition is skewed to low complexity over residues 294–329 and 342–358; these read GPNK…PRPQ and GGPN…SNGP. Residues 365–381 show a composition bias toward basic and acidic residues; the sequence is ASEKGEVTGKQIQDKIK. A tr-type G domain is found at 507–677; that stretch reads DRAPIVTIMG…LLEAEMLELK (171 aa). The tract at residues 516 to 523 is G1; sequence GHVDHGKT. 516–523 is a binding site for GTP; it reads GHVDHGKT. Residues 541 to 545 form a G2 region; it reads GITQH. Residues 563–566 are G3; the sequence is DTPG. GTP contacts are provided by residues 563 to 567 and 617 to 620; these read DTPGH and NKID. Positions 617-620 are G4; sequence NKID. The segment at 653-655 is G5; the sequence is SAK.

Belongs to the TRAFAC class translation factor GTPase superfamily. Classic translation factor GTPase family. IF-2 subfamily.

It is found in the cytoplasm. One of the essential components for the initiation of protein synthesis. Protects formylmethionyl-tRNA from spontaneous hydrolysis and promotes its binding to the 30S ribosomal subunits. Also involved in the hydrolysis of GTP during the formation of the 70S ribosomal complex. The chain is Translation initiation factor IF-2 from Cytophaga hutchinsonii (strain ATCC 33406 / DSM 1761 / CIP 103989 / NBRC 15051 / NCIMB 9469 / D465).